Consider the following 1666-residue polypeptide: Cortactin-binding protein 2 (1666 aa).

Disordered stretches follow at residues 1-25 (MATD…APAE), 202-224 (EKKR…AEME), 366-411 (IVSS…PAIQ), 457-481 (NANN…SPTS), and 501-619 (RFTS…PKPS). Positions 120-274 (KMQERMSTQL…MTEQLKRGND (155 aa)) form a coiled coil. Low complexity-rich tracts occupy residues 385–398 (GPST…PSST) and 457–468 (NANNDQDQNGNN). Residues 469–481 (TQSPPSRDVSPTS) show a composition bias toward polar residues. At Arg-501 the chain carries Asymmetric dimethylarginine. ANK repeat units lie at residues 712–742 (GRPT…DINH), 746–775 (DGHS…QVNA), 779–808 (DGFT…NINH), 812–841 (EGQT…DRSV), 845–874 (DGWT…PACG), and 915–945 (EGWT…EPER). At Ser-1527 the chain carries Phosphoserine. Over residues 1545 to 1566 (SESDISKIADTRDDLRRFDSSR) the composition is skewed to basic and acidic residues. Disordered stretches follow at residues 1545 to 1601 (SESD…RSNR) and 1620 to 1666 (RSKI…KPNQ). The span at 1585–1594 (KEVSPLSSHQ) shows a compositional bias: polar residues. Residues 1627–1641 (SQNTKRSSSSSNTRQ) are compositionally biased toward low complexity. Residues 1648 to 1666 (SKDEIWNLRNNEQIEKPNQ) show a composition bias toward basic and acidic residues.

As to quaternary structure, interacts with CTTN/cortactin SH3 domain. Interacts with STRN, STRN4/zinedin and MOB4/phocein; this interactions mediate the association with the STRIPAK core complex and may regulate dendritic spine distribution of the STRIPAK complex in hippocampal neurons. Activation of glutamate receptors weakens the interaction with STRN and STRN4.

It is found in the cytoplasm. The protein localises to the cell cortex. The protein resides in the cell projection. Its subcellular location is the dendritic spine. Functionally, regulates the dendritic spine distribution of CTTN/cortactin in hippocampal neurons, and thus controls dendritic spinogenesis and dendritic spine maintenance. Associates with the striatin-interacting phosphatase and kinase (STRIPAK) core complex to regulate dendritic spine distribution of the STRIPAK complex in hippocampal neurons. The protein is Cortactin-binding protein 2 (CTTNBP2) of Echinops telfairi (Lesser hedgehog tenrec).